A 576-amino-acid chain; its full sequence is Protein alan shepard (576 aa).

Pro residues predominate over residues 1–12; the sequence is MHPRYSPAPPPQ. The tract at residues 1–66 is disordered; it reads MHPRYSPAPP…GSSSSAAAAP (66 aa). A Phosphotyrosine modification is found at Tyr5. Low complexity predominate over residues 13–24; the sequence is QQQQMGGPPHQQ. Over residues 25 to 35 the composition is skewed to gly residues; it reads QGGGGGGGGNM. The segment covering 37–54 has biased composition (polar residues); sequence GPSNAQQLPPQIPRSQNY. The span at 55–66 shows a compositional bias: low complexity; the sequence is SNGSSSSAAAAP. Phosphotyrosine occurs at positions 125 and 142. Residues 164–225 form a disordered region; that stretch reads PATTTYGQRV…TVQNQNQQGG (62 aa). Residues 178 to 225 are compositionally biased toward low complexity; that stretch reads SPSNTNSSSSSNTGSQSGTLSTSLSNTTNTNTNMGPNGTVQNQNQQGG. RRM domains follow at residues 231–302 and 308–387; these read TNLY…MAKQ and TNLY…FADG. A disordered region spans residues 538 to 576; the sequence is YAPPPTIIPTMPMTDSEQASTAASPDEAYTQYPHQAAPK.

Has a role in the perception of gravity. The sequence is that of Protein alan shepard from Drosophila simulans (Fruit fly).